The sequence spans 218 residues: Ribose-5-phosphate isomerase A (218 aa).

Substrate is bound by residues 28–31, 81–84, and 94–97; these read TGST, DGAD, and KGGG. Glu103 serves as the catalytic Proton acceptor. Lys121 provides a ligand contact to substrate.

This sequence belongs to the ribose 5-phosphate isomerase family. As to quaternary structure, homodimer.

It carries out the reaction aldehydo-D-ribose 5-phosphate = D-ribulose 5-phosphate. Its pathway is carbohydrate degradation; pentose phosphate pathway; D-ribose 5-phosphate from D-ribulose 5-phosphate (non-oxidative stage): step 1/1. Its function is as follows. Catalyzes the reversible conversion of ribose-5-phosphate to ribulose 5-phosphate. In Proteus mirabilis (strain HI4320), this protein is Ribose-5-phosphate isomerase A.